The sequence spans 287 residues: Flagellin (287 aa).

It belongs to the bacterial flagellin family.

The protein localises to the secreted. The protein resides in the bacterial flagellum. Flagellin is the subunit protein which polymerizes to form the filaments of bacterial flagella. The sequence is that of Flagellin (flaA) from Listeria monocytogenes serovar 1/2a (strain ATCC BAA-679 / EGD-e).